The primary structure comprises 741 residues: Homeobox protein AHox1 (741 aa).

Disordered stretches follow at residues 1–30 (MEKM…KSSS), 61–96 (KRRL…NFCR), 146–183 (VNPL…KSCC), 203–226 (ADSD…INQD), 357–383 (KTEE…PIRT), 476–501 (FDFP…NPQT), and 616–642 (QYGH…GTVK). Residues 7–19 (KSVSPVPFNNSNN) show a composition bias toward low complexity. Basic and acidic residues predominate over residues 63-78 (RLLDPQNKKKQNRFER). Polar residues predominate over residues 79–92 (YSSSNHAQEQSSEE). Low complexity predominate over residues 169-181 (SFSSSSEASDSKS). The span at 363 to 375 (RSPSETKQYSPDA) shows a compositional bias: polar residues. Polar residues predominate over residues 616-629 (QYGHMSSSQNPHSE). Positions 630–639 (TQNRSEEVRG) are enriched in basic and acidic residues. Residues 645-704 (RKWNRAVFSLMQRRGLEKSFQSQKYVAKPERRKLADALSLTDAQVKIWFQNRRMKWRQEI) constitute a DNA-binding region (homeobox). The tract at residues 722 to 741 (EIEKEKTQTPSDEGEVINVD) is disordered.

It belongs to the H2.0 homeobox family. As to expression, expressed in the tissues of endodermal origin.

It localises to the nucleus. This chain is Homeobox protein AHox1 (AHOX1), found in Halocynthia roretzi (Sea squirt).